The following is a 183-amino-acid chain: Translocon-associated protein subunit beta (183 aa).

Positions 1 to 17 (MRLLSFVVLALFAVTQA) are cleaved as a signal peptide. Residues 18 to 149 (EEGARLLASK…DRRFSPHFLD (132 aa)) are Lumenal-facing. Residues Asn-88 and Asn-104 are each glycosylated (N-linked (GlcNAc...) asparagine). A helical transmembrane segment spans residues 150–169 (WAAFGVMTLPSIGIPLLLWY). The Cytoplasmic portion of the chain corresponds to 170–183 (SSKRKYDTPKTKKN).

The protein belongs to the TRAP-beta family. In terms of assembly, heterotetramer of TRAP-alpha, TRAP-beta, TRAP-delta and TRAP-gamma. Interacts with STING1.

The protein resides in the endoplasmic reticulum membrane. TRAP proteins are part of a complex whose function is to bind calcium to the ER membrane and thereby regulate the retention of ER resident proteins. In Homo sapiens (Human), this protein is Translocon-associated protein subunit beta (SSR2).